A 506-amino-acid chain; its full sequence is Probable lipid II flippase MurJ (506 aa).

A run of 13 helical transmembrane segments spans residues 4–24 (YVVS…MGFV), 86–106 (TVIT…IIFA), 127–147 (VFGY…FVSV), 153–173 (IFFI…LSIF), 181–201 (IYSA…IPFA), 232–252 (IFGF…ASTL), 263–283 (AVVY…TVIF), 308–328 (ILLL…DYIL), 345–365 (TASV…FGFF), 377–397 (TPFY…VFGI), 405–425 (LALA…FIIL), 436–456 (ILFV…IYFF), and 474–494 (LMAA…VLGI).

It belongs to the MurJ/MviN family.

The protein localises to the cell inner membrane. Its pathway is cell wall biogenesis; peptidoglycan biosynthesis. Functionally, involved in peptidoglycan biosynthesis. Transports lipid-linked peptidoglycan precursors from the inner to the outer leaflet of the cytoplasmic membrane. This Borreliella burgdorferi (strain ATCC 35210 / DSM 4680 / CIP 102532 / B31) (Borrelia burgdorferi) protein is Probable lipid II flippase MurJ.